A 320-amino-acid polypeptide reads, in one-letter code: MARPKIALIGAGQIGGTLAHLVALKELGDVVLFDIAEGTPEGKALDIAESGPSEGFDAKLKGTQSYADIAGADVCIVTAGVPRKPGMSRDDLLGINLKVMKSVGEGIRDNAPDAFVICITNPLDAMVWALQQFSGLPANKVCGMAGVLDSARFRHFLAEEFNVSMKDVTAFVLGGHGDTMVPSVRYSTVAGIPLPDLIKMGWTSQEKLDAIVQRTRDGGAEIVGLLKTGSAYYAPATSAIEMAEAYLKDQKRVLPCAAYCNGELGVKGMYVGVPTVIGAGGIERIIDVSLTKEEQDMFDNSVNAVKGLVEACKGIDGSLA.

NAD(+)-binding positions include 10–15 and Asp34; that span reads GAGQIG. Residues Arg83 and Arg89 each coordinate substrate. NAD(+) contacts are provided by residues Asn96 and 119–121; that span reads ITN. Residues Asn121 and Arg152 each contribute to the substrate site. His176 functions as the Proton acceptor in the catalytic mechanism.

The protein belongs to the LDH/MDH superfamily. MDH type 3 family.

The catalysed reaction is (S)-malate + NAD(+) = oxaloacetate + NADH + H(+). Its function is as follows. Catalyzes the reversible oxidation of malate to oxaloacetate. The sequence is that of Malate dehydrogenase from Ruegeria pomeroyi (strain ATCC 700808 / DSM 15171 / DSS-3) (Silicibacter pomeroyi).